Here is a 203-residue protein sequence, read N- to C-terminus: uncharacterized protein (203 aa).

Residues valine 180–isoleucine 200 traverse the membrane as a helical segment.

It localises to the virion. The protein localises to the host membrane. This is an uncharacterized protein from Acanthamoeba polyphaga (Amoeba).